A 283-amino-acid chain; its full sequence is Pantothenate synthetase (283 aa).

30 to 37 (MGNLHNGH) contributes to the ATP binding site. His37 acts as the Proton donor in catalysis. Gln61 serves as a coordination point for (R)-pantoate. Gln61 lines the beta-alanine pocket. 149 to 152 (GEKD) serves as a coordination point for ATP. (R)-pantoate is bound at residue Gln155. 186–189 (LSSR) is a binding site for ATP.

This sequence belongs to the pantothenate synthetase family. In terms of assembly, homodimer.

The protein localises to the cytoplasm. The catalysed reaction is (R)-pantoate + beta-alanine + ATP = (R)-pantothenate + AMP + diphosphate + H(+). It participates in cofactor biosynthesis; (R)-pantothenate biosynthesis; (R)-pantothenate from (R)-pantoate and beta-alanine: step 1/1. Its function is as follows. Catalyzes the condensation of pantoate with beta-alanine in an ATP-dependent reaction via a pantoyl-adenylate intermediate. This is Pantothenate synthetase from Shigella flexneri serotype 5b (strain 8401).